The chain runs to 147 residues: CRISP-1 (147 aa).

Belongs to the CRISP family. As to expression, expressed by the venom gland.

It is found in the secreted. The protein is CRISP-1 of Phoneutria keyserlingi (Brazilian wandering spider).